A 20-amino-acid chain; its full sequence is Pregnancy-associated glycoprotein 55h (20 aa).

N-linked (GlcNAc...) asparagine glycosylation is present at Asn4.

Belongs to the peptidase A1 family. In terms of tissue distribution, highly expressed in the placenta between day 60 and day 100 of gestation.

It localises to the secreted. The protein resides in the extracellular space. The sequence is that of Pregnancy-associated glycoprotein 55h from Ovis aries (Sheep).